Reading from the N-terminus, the 750-residue chain is Meiosis protein mei2 (750 aa).

Positions 1 to 20 (MIMETESPLSITSPSPSDST) are disordered. Positions 7 to 20 (SPLSITSPSPSDST) are enriched in polar residues. 2 consecutive RRM domains span residues 195–270 (RYLF…FCQR) and 293–361 (LLLN…CLQV).

In terms of assembly, binds rad24 when phosphorylated. Inactivated by phosphorylation by ran1/pat1.

Crucial for commitment to meiosis but it is not sufficient itself for the commitment. May be a splicing regulator. This is Meiosis protein mei2 (mei2) from Schizosaccharomyces pombe (strain 972 / ATCC 24843) (Fission yeast).